A 557-amino-acid polypeptide reads, in one-letter code: Potassium-transporting ATPase potassium-binding subunit (557 aa).

A run of 12 helical transmembrane segments spans residues glycine 5–serine 25, leucine 63–glycine 83, glycine 132–isoleucine 152, leucine 170–isoleucine 190, phenylalanine 253–valine 273, leucine 283–valine 303, valine 329–alanine 349, alanine 356–valine 376, glycine 379–glycine 399, leucine 416–methionine 436, leucine 484–alanine 504, and leucine 526–alanine 546.

Belongs to the KdpA family. In terms of assembly, the system is composed of three essential subunits: KdpA, KdpB and KdpC.

The protein localises to the cell inner membrane. Part of the high-affinity ATP-driven potassium transport (or Kdp) system, which catalyzes the hydrolysis of ATP coupled with the electrogenic transport of potassium into the cytoplasm. This subunit binds the periplasmic potassium ions and delivers the ions to the membrane domain of KdpB through an intramembrane tunnel. In Escherichia coli (strain K12 / MC4100 / BW2952), this protein is Potassium-transporting ATPase potassium-binding subunit.